We begin with the raw amino-acid sequence, 528 residues long: GTPase Der (528 aa).

2 stretches are compositionally biased toward acidic residues: residues 1 to 12 (MDVEGAFADEEE) and 30 to 62 (GYDDDFAPDDSDEDEDDDDYEFDEDDFAAPDFG). A disordered region spans residues 1-62 (MDVEGAFADE…EDDFAAPDFG (62 aa)). 2 EngA-type G domains span residues 90-253 (CTVA…PEEP) and 263-436 (RRVA…ENWD). GTP is bound by residues 96 to 103 (GRPNVGKS), 143 to 147 (DTGGW), 205 to 208 (NKFD), 269 to 276 (GKPNVGKS), 316 to 320 (DTAGL), and 381 to 384 (NKWD). The KH-like domain occupies 437–519 (RRVSTGQLNN…PIRIAVRVRE (83 aa)).

This sequence belongs to the TRAFAC class TrmE-Era-EngA-EngB-Septin-like GTPase superfamily. EngA (Der) GTPase family. As to quaternary structure, associates with the 50S ribosomal subunit.

Functionally, GTPase that plays an essential role in the late steps of ribosome biogenesis. This chain is GTPase Der, found in Corynebacterium efficiens (strain DSM 44549 / YS-314 / AJ 12310 / JCM 11189 / NBRC 100395).